We begin with the raw amino-acid sequence, 171 residues long: Replication restart protein PriC (171 aa).

It belongs to the PriC family. In terms of assembly, monomer. Component of the replication restart primosome, which is composed of PriA, PriB, PriC, DnaBe and DnaT; DnaG primase associates transiently with this complex. Interacts with the C-terminus of SSB. SSB interaction is required to load the main replicative helicase onto substrate replication forks. Interacts with helicase DnaB alone and in the DnaB-DnaC complex, probably 1:1 binding with DnaB.

Involved in the restart of stalled replication forks, which reloads the DnaB replicative helicase on sites other than the origin of replication. In vitro can load (E.coli) DnaB replicative helicase from a DnaB-DnaC complex on a single-stranded DNA (ssDNA)-binding protein (SSB)-coated stalled replication fork with no leading- or lagging-strand in the absence of other primosome proteins (PriA, PriB or DnaT). Binds SSB (tested with E.coli protein) and ssDNA. Complements priC in an E.coli priB-priC double deletion. The polypeptide is Replication restart protein PriC (Cronobacter sakazakii (strain ATCC BAA-894) (Enterobacter sakazakii)).